Here is a 448-residue protein sequence, read N- to C-terminus: Adenosylhomocysteinase (448 aa).

Thr61, Asp136, and Glu161 together coordinate substrate. 162-164 contributes to the NAD(+) binding site; it reads TTA. Lys191 and Asp195 together coordinate substrate. Residues Asn196, 225-230, Glu248, Asn283, 304-306, and Asn360 each bind NAD(+); these read GYGDVG and IGH.

It belongs to the adenosylhomocysteinase family. NAD(+) serves as cofactor.

The protein localises to the cytoplasm. The catalysed reaction is S-adenosyl-L-homocysteine + H2O = L-homocysteine + adenosine. The protein operates within amino-acid biosynthesis; L-homocysteine biosynthesis; L-homocysteine from S-adenosyl-L-homocysteine: step 1/1. In terms of biological role, may play a key role in the regulation of the intracellular concentration of adenosylhomocysteine. The sequence is that of Adenosylhomocysteinase from Rhodopirellula baltica (strain DSM 10527 / NCIMB 13988 / SH1).